The following is a 243-amino-acid chain: Carboxy-S-adenosyl-L-methionine synthase (243 aa).

S-adenosyl-L-methionine contacts are provided by residues Y35, 68-70, 92-93, and R199; these read GCS and DN.

The protein belongs to the class I-like SAM-binding methyltransferase superfamily. Cx-SAM synthase family. Homodimer.

It catalyses the reaction prephenate + S-adenosyl-L-methionine = carboxy-S-adenosyl-L-methionine + 3-phenylpyruvate + H2O. Its function is as follows. Catalyzes the conversion of S-adenosyl-L-methionine (SAM) to carboxy-S-adenosyl-L-methionine (Cx-SAM). The chain is Carboxy-S-adenosyl-L-methionine synthase from Helicobacter pylori (strain ATCC 700392 / 26695) (Campylobacter pylori).